Here is a 202-residue protein sequence, read N- to C-terminus: Recoverin (202 aa).

Gly2 carries N-myristoyl glycine lipidation. EF-hand domains lie at 24-59 (TEEE…FFPE), 61-96 (DPKA…TSAG), 97-132 (KTNQ…IFKM), and 147-182 (TPEK…NKEI). Cys39 is subject to Cysteine sulfenic acid (-SOH). Asp74, Asn76, Asp78, Thr80, Glu85, Asp110, Asp112, Asn114, Thr116, and Glu121 together coordinate Ca(2+). The interval 189–192 (EPQK) is interaction with GRK1. Residues 191–202 (QKVKEKLKEKKL) form a modulates EF-hand 3 domain calcium binding affinity region.

The protein belongs to the recoverin family. In terms of assembly, homodimer; disulfide-linked. Homodimerization is caused by prolonged intense illumination. May form a complex composed of RHO, GRK1 and RCVRN in a Ca(2+)-dependent manner; RCVRN prevents the interaction between GRK1 and RHO. Interacts (via C-terminus) with GRK1 (via N-terminus); the interaction is Ca(2+)-dependent. The N-terminal glycine is linked to one of four different types of acyl groups. The most abundant is myristoleate (14:1), but 14:0, 14:2, and 12:0 acyl residues are also present. The Ca(2+) induced exposure of the myristoyl group, known as the calcium-myristoyl switch, promotes RCVRN binding to the photoreceptor cell membranes only when intracellular Ca(2+) concentration is high. In terms of processing, oxidation on Cys-39 occurs in response to prolonged intense illumination and results in the formation of disulfide homodimers, and to a lesser extent disulfide-linked heterodimers. As to expression, expressed in the retina (at protein level). Expressed in the pineal gland (at protein level).

The protein localises to the photoreceptor inner segment. It is found in the cell projection. It localises to the cilium. Its subcellular location is the photoreceptor outer segment. The protein resides in the photoreceptor outer segment membrane. The protein localises to the perikaryon. Its function is as follows. Acts as a calcium sensor and regulates phototransduction of cone and rod photoreceptor cells. Modulates light sensitivity of cone photoreceptor in dark and dim conditions. In response to high Ca(2+) levels induced by low light levels, prolongs RHO/rhodopsin activation in rod photoreceptor cells by binding to and inhibiting GRK1-mediated phosphorylation of RHO/rhodopsin. Plays a role in scotopic vision/enhances vision in dim light by enhancing signal transfer between rod photoreceptors and rod bipolar cells. Improves rod photoreceptor sensitivity in dim light and mediates response of rod photoreceptors to facilitate detection of change and motion in bright light. The protein is Recoverin (RCVRN) of Bos taurus (Bovine).